The chain runs to 407 residues: Serpin-Z2 (407 aa).

The tract at residues 1–28 is disordered; it reads MDSKRKNQELSTSETADPSLSKTNKKQK. A compositionally biased stretch (polar residues) spans 9–22; it reads ELSTSETADPSLSK. Positions 344–368 are RCL; it reads GTEAAAATTVVVVTGSCLWEPKKKI.

This sequence belongs to the serpin family.

Probable serine protease inhibitor. The sequence is that of Serpin-Z2 from Arabidopsis thaliana (Mouse-ear cress).